The chain runs to 296 residues: Nucleotide-binding protein SPJ_1472 (296 aa).

13-20 (GMSGAGKT) is a binding site for ATP. 63-66 (DMRS) is a GTP binding site.

The protein belongs to the RapZ-like family.

In terms of biological role, displays ATPase and GTPase activities. The protein is Nucleotide-binding protein SPJ_1472 of Streptococcus pneumoniae (strain JJA).